The primary structure comprises 293 residues: uncharacterized protein (293 aa).

The disordered stretch occupies residues 1–22; the sequence is MTFNEGVQIDTSTTSTSGSGGG. The chain crosses the membrane as a helical span at residues 25 to 45; sequence LAIGGGLGGLLVVVVAMLLGV. The tract at residues 243–265 is disordered; the sequence is GDDRIQQQTTGRTNPETWTHGSA. Positions 248–265 are enriched in polar residues; the sequence is QQQTTGRTNPETWTHGSA.

It is found in the membrane. This is an uncharacterized protein from Mycobacterium tuberculosis (strain CDC 1551 / Oshkosh).